A 190-amino-acid polypeptide reads, in one-letter code: PBP1-interacting protein LSM12 (190 aa).

One can recognise a Sm domain in the interval 2 to 69; the sequence is PVCNNDSQLI…IKEVTALRDN (68 aa). Residues 84–190 form the AD domain; it reads PSMQAARDRS…ERVQKTLSKK (107 aa).

This sequence belongs to the LSM12 family. Forms a complex composed of at least MKT1, PBP1, XAC1 and LSM12. Forms a complex composed of at least MKT1L, PBP1, XAC1 and LSM12. Within the complex, interacts with PBP1; the interaction is direct.

Functionally, involved in post-transcriptional regulation of gene expression. The sequence is that of PBP1-interacting protein LSM12 from Trypanosoma brucei brucei (strain 927/4 GUTat10.1).